The sequence spans 597 residues: Vacuolar protein sorting-associated protein 33A (597 aa).

Belongs to the STXBP/unc-18/SEC1 family. As to quaternary structure, core component of at least two putative endosomal tethering complexes, the homotypic fusion and vacuole protein sorting (HOPS) complex and the class C core vacuole/endosome tethering (CORVET) complex. Their common core is composed of the class C Vps proteins VPS11, VPS16, VPS18 and VPS33A, which in HOPS further associates with VPS39 and VPS41 and in CORVET with VPS8 and TGFBRAP1. Interacts with RAB5C, UVRAG, STX17, MON1A and MON1B. Associates with adaptor protein complex 3 (AP-3) and clathrin. Interacts with PLEKHM1. Ubiquitous.

It localises to the cytoplasmic vesicle. Its subcellular location is the late endosome membrane. The protein localises to the lysosome membrane. It is found in the early endosome. The protein resides in the autophagosome. It localises to the clathrin-coated vesicle. Functionally, plays a role in vesicle-mediated protein trafficking to lysosomal compartments including the endocytic membrane transport and autophagic pathways. Believed to act as a core component of the putative HOPS and CORVET endosomal tethering complexes which are proposed to be involved in the Rab5-to-Rab7 endosome conversion probably implicating MON1A/B, and via binding SNAREs and SNARE complexes to mediate tethering and docking events during SNARE-mediated membrane fusion. The HOPS complex is proposed to be recruited to Rab7 on the late endosomal membrane and to regulate late endocytic, phagocytic and autophagic traffic towards lysosomes. The CORVET complex is proposed to function as a Rab5 effector to mediate early endosome fusion probably in specific endosome subpopulations. Required for fusion of endosomes and autophagosomes with lysosomes; the function is dependent on its association with VPS16 but not VIPAS39. The function in autophagosome-lysosome fusion implicates STX17 but not UVRAG. The sequence is that of Vacuolar protein sorting-associated protein 33A (Vps33a) from Rattus norvegicus (Rat).